The following is a 141-amino-acid chain: Large ribosomal subunit protein uL11 (141 aa).

It belongs to the universal ribosomal protein uL11 family. In terms of assembly, part of the ribosomal stalk of the 50S ribosomal subunit. Interacts with L10 and the large rRNA to form the base of the stalk. L10 forms an elongated spine to which L12 dimers bind in a sequential fashion forming a multimeric L10(L12)X complex. In terms of processing, one or more lysine residues are methylated.

In terms of biological role, forms part of the ribosomal stalk which helps the ribosome interact with GTP-bound translation factors. In Chlamydia pneumoniae (Chlamydophila pneumoniae), this protein is Large ribosomal subunit protein uL11.